The primary structure comprises 487 residues: Schwannomin-interacting protein 1 (487 aa).

4 disordered regions span residues 1–74 (MERS…VSAL), 88–221 (VIDE…PVPP), 236–260 (FREQ…NERE), and 308–354 (SGSD…SLDD). A compositionally biased stretch (basic and acidic residues) spans 14–27 (DQGKHSDSDYREDG). A compositionally biased stretch (low complexity) spans 32-67 (SDAGSSSSSSRASSQSNSTKVTPCSECKSSSSPGGS). A compositionally biased stretch (acidic residues) spans 92-106 (WAPEEDGEEEEEEDE). Composition is skewed to basic and acidic residues over residues 107 to 123 (RDQR…REPG) and 153 to 162 (HQHDPQDLRH). Phosphoserine is present on Ser-117. Positions 242–255 (RNQGQARTNSTSAQ) are enriched in polar residues. The span at 309–323 (GSDKDSDADDSKTET) shows a compositional bias: basic and acidic residues. Positions 324 to 335 (SLDTPLSPMSKQ) are enriched in polar residues. Over residues 344–354 (TTEEESESLDD) the composition is skewed to acidic residues. Residues 424-458 (IGQLQVIVNDLHSQIESLNEELVQLLLIRDELHTE) adopt a coiled-coil conformation.

It belongs to the SCHIP1 family. Homooligomer (via coiled coil domain). Interacts with NF2; the interaction is direct. Interacts with ANK3. In terms of tissue distribution, preferentially expressed in brain, skeletal muscles and heart. Also expressed in detected in pancreas, kidney, liver, lung, and placenta.

It is found in the cytoplasm. In Homo sapiens (Human), this protein is Schwannomin-interacting protein 1.